Consider the following 331-residue polypeptide: Rho GTPase-activating protein 5 (331 aa).

The 14-residue stretch at 3–16 (IGGPTNIRHVAHVT) folds into the CRIB domain. The 178-residue stretch at 48–225 (VSTESMQLSY…LLKSLTEKTV (178 aa)) folds into the Rho-GAP domain. The segment covering 227 to 251 (EREASSSVVDRRCSKEAEDGEKEKD) has biased composition (basic and acidic residues). Positions 227-331 (EREASSSVVD…VQPPICSSNP (105 aa)) are disordered. The segment covering 252–277 (NEEEEEDEEEEEEEEDEDEDEEEEGD) has biased composition (acidic residues).

As to expression, expressed in differentiating xylem cells.

The protein localises to the cell membrane. Functionally, acts as a GTPase activator for the Rac-type GTPase by converting it to an inactive GDP-bound state. In Arabidopsis thaliana (Mouse-ear cress), this protein is Rho GTPase-activating protein 5 (ROPGAP5).